The following is a 364-amino-acid chain: Autophagy-related protein 5 (364 aa).

The span at 1–13 (MASPNPYSYSPQL) shows a compositional bias: polar residues. Positions 1-103 (MASPNPYSYS…SLPPKPKPSS (103 aa)) are disordered. The span at 28–42 (SSPSFRSTPFRSSRG) shows a compositional bias: low complexity. Positions 43-53 (TGAGTGIGLGL) are enriched in gly residues. The span at 72-82 (RSGDGSHDDLP) shows a compositional bias: basic and acidic residues. A Glycyl lysine isopeptide (Lys-Gly) (interchain with G-Cter in ATG12) cross-link involves residue lysine 202. A disordered region spans residues 262–306 (PSSPSPPSSDQQQPQRPGGSSSSGSYRVMQTLVPPRGPNNRTPQT). A compositionally biased stretch (low complexity) spans 269-286 (SSDQQQPQRPGGSSSSGS).

It belongs to the ATG5 family. In terms of assembly, conjugated with atg12. In terms of processing, conjugated to atg12; which is essential for autophagy.

It localises to the preautophagosomal structure membrane. Functionally, involved in cytoplasm to vacuole transport (Cvt) and autophagic vesicle formation. Autophagy is essential for maintenance of amino acid levels and protein synthesis under nitrogen starvation. Required for selective autophagic degradation of the nucleus (nucleophagy). Also required for mitophagy, which eliminates defective or superfluous mitochondria in order to fulfill cellular energy requirements and prevent excess ROS production. Conjugation with atg12, through a ubiquitin-like conjugating system involving apg-5/atg7 as an E1-like activating enzyme and atg10 as an E2-like conjugating enzyme, is essential for its function. The atg12-apg-4/atg5 conjugate acts as an E3-like enzyme which is required for lipidation of apg-6/atg8 and apg-6/atg8 association to the vesicle membranes. The polypeptide is Autophagy-related protein 5 (apg-4) (Neurospora crassa (strain ATCC 24698 / 74-OR23-1A / CBS 708.71 / DSM 1257 / FGSC 987)).